Reading from the N-terminus, the 364-residue chain is DNA replication and repair protein RecF (364 aa).

Residue Gly30–Thr37 coordinates ATP.

Belongs to the RecF family.

The protein localises to the cytoplasm. The RecF protein is involved in DNA metabolism; it is required for DNA replication and normal SOS inducibility. RecF binds preferentially to single-stranded, linear DNA. It also seems to bind ATP. This is DNA replication and repair protein RecF from Streptococcus uberis (strain ATCC BAA-854 / 0140J).